Reading from the N-terminus, the 341-residue chain is Glycerol-3-phosphate dehydrogenase [NAD(P)+] (341 aa).

Residues serine 15, tryptophan 16, arginine 36, and lysine 110 each coordinate NADPH. 3 residues coordinate sn-glycerol 3-phosphate: lysine 110, glycine 139, and serine 141. An NADPH-binding site is contributed by alanine 143. Sn-glycerol 3-phosphate is bound by residues lysine 194, aspartate 247, serine 257, arginine 258, and asparagine 259. The Proton acceptor role is filled by lysine 194. An NADPH-binding site is contributed by arginine 258. The NADPH site is built by valine 282 and glutamate 284.

This sequence belongs to the NAD-dependent glycerol-3-phosphate dehydrogenase family.

The protein resides in the cytoplasm. It carries out the reaction sn-glycerol 3-phosphate + NAD(+) = dihydroxyacetone phosphate + NADH + H(+). It catalyses the reaction sn-glycerol 3-phosphate + NADP(+) = dihydroxyacetone phosphate + NADPH + H(+). Its pathway is membrane lipid metabolism; glycerophospholipid metabolism. Functionally, catalyzes the reduction of the glycolytic intermediate dihydroxyacetone phosphate (DHAP) to sn-glycerol 3-phosphate (G3P), the key precursor for phospholipid synthesis. This is Glycerol-3-phosphate dehydrogenase [NAD(P)+] from Stenotrophomonas maltophilia (strain K279a).